A 346-amino-acid chain; its full sequence is UDP-3-O-acylglucosamine N-acyltransferase (346 aa).

Histidine 253 (proton acceptor) is an active-site residue.

This sequence belongs to the transferase hexapeptide repeat family. LpxD subfamily. Homotrimer.

The enzyme catalyses a UDP-3-O-[(3R)-3-hydroxyacyl]-alpha-D-glucosamine + a (3R)-hydroxyacyl-[ACP] = a UDP-2-N,3-O-bis[(3R)-3-hydroxyacyl]-alpha-D-glucosamine + holo-[ACP] + H(+). It functions in the pathway bacterial outer membrane biogenesis; LPS lipid A biosynthesis. In terms of biological role, catalyzes the N-acylation of UDP-3-O-acylglucosamine using 3-hydroxyacyl-ACP as the acyl donor. Is involved in the biosynthesis of lipid A, a phosphorylated glycolipid that anchors the lipopolysaccharide to the outer membrane of the cell. The chain is UDP-3-O-acylglucosamine N-acyltransferase from Rickettsia prowazekii (strain Madrid E).